A 406-amino-acid chain; its full sequence is Magnesium transporter NIPA4 (406 aa).

Residues 1–57 (MELRVANANGSCENGSIVSLYCSSQEVLCQIVRGISPEEPYNATLITWQERVRKKYG) lie on the Extracellular side of the membrane. 3 N-linked (GlcNAc...) asparagine glycosylation sites follow: N9, N14, and N42. Residues 58 to 78 (FYIGVGLAFLSCFLIGTSVIL) traverse the membrane as a helical segment. Over 79–126 (KKKGLIRLVATGATRAVNGGYGYLKDPMWWAGMATMSAGEVANFGAYA) the chain is Cytoplasmic. A helical transmembrane segment spans residues 127–147 (FAPATVVTPLGALSVLISAIF). The Extracellular segment spans residues 148–155 (SSYCLGES). A helical membrane pass occupies residues 156–176 (LNLLGKLGCVICMAGSTVMVI). The Cytoplasmic portion of the chain corresponds to 177-197 (HAPKEEKVTTVAEMASKMKDT). Residues 198 to 218 (GFIVFAVLLVVSCLILIFIVA) form a helical membrane-spanning segment. At 219–225 (PRYGQRN) the chain is on the extracellular side. Residues 226–246 (ILIYIIICSVIGSFSVTAVKG) traverse the membrane as a helical segment. Topologically, residues 247 to 263 (LGVTIRNFFQGLPVVRH) are cytoplasmic. The helical transmembrane segment at 264–284 (PLPYILSLILGLSIIIQVNFL) threads the bilayer. The Extracellular segment spans residues 285–295 (NRALDIFNTSL). N292 is a glycosylation site (N-linked (GlcNAc...) asparagine). A helical membrane pass occupies residues 296–316 (VFPIYYVFFTTVVVASSIVLF). The Cytoplasmic segment spans residues 317–326 (KEWYTMSAVD). A helical transmembrane segment spans residues 327–347 (IVGTLSGFVTIILGVFMLHAF). Topologically, residues 348-406 (KDLDINQISLPHTHKNPTPAPAPEPTVIKLEDKNVLVDNIELASTPSPQQKPKVFMTDS) are extracellular.

The protein belongs to the NIPA family.

The protein resides in the cell membrane. The enzyme catalyses Mg(2+)(in) = Mg(2+)(out). Its function is as follows. Acts as a Mg(2+) transporter. Can also transport other divalent cations such as Ba(2+), Sr(2+) and Fe(2+) but to a much less extent than Mg(2+). May be a receptor for ligands (trioxilins A3 and B3) from the hepoxilin pathway. This Mus musculus (Mouse) protein is Magnesium transporter NIPA4 (Nipal4).